The primary structure comprises 422 residues: UDP-N-acetylglucosamine 1-carboxyvinyltransferase (422 aa).

22–23 is a phosphoenolpyruvate binding site; the sequence is KN. Arginine 95 provides a ligand contact to UDP-N-acetyl-alpha-D-glucosamine. Catalysis depends on cysteine 119, which acts as the Proton donor. Cysteine 119 is subject to 2-(S-cysteinyl)pyruvic acid O-phosphothioketal. UDP-N-acetyl-alpha-D-glucosamine-binding positions include 124 to 128, aspartate 309, and valine 331; that span reads RPIDQ.

It belongs to the EPSP synthase family. MurA subfamily.

The protein resides in the cytoplasm. It catalyses the reaction phosphoenolpyruvate + UDP-N-acetyl-alpha-D-glucosamine = UDP-N-acetyl-3-O-(1-carboxyvinyl)-alpha-D-glucosamine + phosphate. Its pathway is cell wall biogenesis; peptidoglycan biosynthesis. Functionally, cell wall formation. Adds enolpyruvyl to UDP-N-acetylglucosamine. The sequence is that of UDP-N-acetylglucosamine 1-carboxyvinyltransferase from Anaeromyxobacter sp. (strain Fw109-5).